We begin with the raw amino-acid sequence, 160 residues long: Small ribosomal subunit protein uS7 (160 aa).

Belongs to the universal ribosomal protein uS7 family. As to quaternary structure, part of the 30S ribosomal subunit. Contacts proteins S9 and S11.

One of the primary rRNA binding proteins, it binds directly to 16S rRNA where it nucleates assembly of the head domain of the 30S subunit. Is located at the subunit interface close to the decoding center, probably blocks exit of the E-site tRNA. This Rickettsia conorii (strain ATCC VR-613 / Malish 7) protein is Small ribosomal subunit protein uS7.